The chain runs to 618 residues: uncharacterized protein (618 aa).

Positions 1–29 are cleaved as a signal peptide; sequence MSFLVLPPEVNSALMFAGAGSGPTLAAAA. Residues 598-618 are disordered; the sequence is SGDNSSGGFNAGNDQSGFFDG.

This sequence belongs to the mycobacterial PPE family.

This is an uncharacterized protein from Mycobacterium tuberculosis (strain ATCC 25618 / H37Rv).